Reading from the N-terminus, the 303-residue chain is Diaminopimelate epimerase (303 aa).

Substrate contacts are provided by N15, Q47, and N67. Residue C76 is the Proton donor of the active site. Substrate-binding positions include 77–78 (GN), N163, N197, and 215–216 (ER). The active-site Proton acceptor is the C224. 225–226 (GS) is a binding site for substrate.

This sequence belongs to the diaminopimelate epimerase family. Homodimer.

The protein resides in the cytoplasm. The enzyme catalyses (2S,6S)-2,6-diaminopimelate = meso-2,6-diaminopimelate. Its pathway is amino-acid biosynthesis; L-lysine biosynthesis via DAP pathway; DL-2,6-diaminopimelate from LL-2,6-diaminopimelate: step 1/1. Functionally, catalyzes the stereoinversion of LL-2,6-diaminopimelate (L,L-DAP) to meso-diaminopimelate (meso-DAP), a precursor of L-lysine and an essential component of the bacterial peptidoglycan. The polypeptide is Diaminopimelate epimerase (Allorhizobium ampelinum (strain ATCC BAA-846 / DSM 112012 / S4) (Agrobacterium vitis (strain S4))).